The primary structure comprises 83 residues: uncharacterized protein (83 aa).

The next 3 helical transmembrane spans lie at 7–26, 36–58, and 65–82; these read FARF…IVSY, LSPL…ILPF, and ILTV…YLAF.

The protein resides in the cell membrane. This is an uncharacterized protein from Archaeoglobus fulgidus (strain ATCC 49558 / DSM 4304 / JCM 9628 / NBRC 100126 / VC-16).